Consider the following 426-residue polypeptide: Testicular acid phosphatase (426 aa).

The N-terminal stretch at 1 to 26 (MAGLGFWGHPAGPLLLLLLLVLPPRA) is a signal peptide. Over 27 to 393 (LPEGPLVFVA…AAIPPAPVVP (367 aa)) the chain is Extracellular. His41 acts as the Nucleophile in catalysis. 3 cysteine pairs are disulfide-bonded: Cys159/Cys378, Cys214/Cys312, and Cys353/Cys357. Residues Asn191 and Asn269 are each glycosylated (N-linked (GlcNAc...) asparagine). Catalysis depends on Asp289, which acts as the Proton donor. N-linked (GlcNAc...) asparagine glycans are attached at residues Asn330 and Asn339. The helical transmembrane segment at 394 to 414 (LLAGAVAVLVALSLGLGLLAW) threads the bilayer. Over 415–426 (RPGCLRALGGPV) the chain is Cytoplasmic.

It belongs to the histidine acid phosphatase family. In terms of assembly, homodimer. Post-translationally, glycosylated. In terms of tissue distribution, expressed mainly in the testis. Also expressed in the brain where they are enriched at the postsynaptic sites. Expressed at lower levels in the trachea, prostate, bone marrow, spinal cord, colon, fetal brain, heart, thymus, fetal liver, spleen, leukocytes, ovary, small intestine, pancreas and skeletal muscle. Expression is significantly lower in testicular cancer tissues than in normal testicular tissues. Isoform 3 is expressed in the testis, trachea, prostate and bone marrow.

It localises to the membrane. The catalysed reaction is a phosphate monoester + H2O = an alcohol + phosphate. In terms of biological role, may dephosphorylate receptor tyrosine-protein kinase ERBB4 and inhibits its ligand-induced proteolytic cleavage. May play a role in odontogenesis. In Homo sapiens (Human), this protein is Testicular acid phosphatase.